A 252-amino-acid polypeptide reads, in one-letter code: Adenosylcobinamide-GDP ribazoletransferase (252 aa).

The next 7 membrane-spanning stretches (helical) occupy residues Gly-34–Lys-54, Leu-55–Val-75, Tyr-113–Val-133, Leu-138–Gly-158, Ile-174–Met-194, Phe-198–Phe-218, and Leu-230–Ile-250.

It belongs to the CobS family. Requires Mg(2+) as cofactor.

The protein localises to the cell membrane. It catalyses the reaction alpha-ribazole + adenosylcob(III)inamide-GDP = adenosylcob(III)alamin + GMP + H(+). The enzyme catalyses alpha-ribazole 5'-phosphate + adenosylcob(III)inamide-GDP = adenosylcob(III)alamin 5'-phosphate + GMP + H(+). The protein operates within cofactor biosynthesis; adenosylcobalamin biosynthesis; adenosylcobalamin from cob(II)yrinate a,c-diamide: step 7/7. Joins adenosylcobinamide-GDP and alpha-ribazole to generate adenosylcobalamin (Ado-cobalamin). Also synthesizes adenosylcobalamin 5'-phosphate from adenosylcobinamide-GDP and alpha-ribazole 5'-phosphate. This chain is Adenosylcobinamide-GDP ribazoletransferase, found in Clostridium kluyveri (strain NBRC 12016).